Here is a 450-residue protein sequence, read N- to C-terminus: Glucose-6-phosphate isomerase (450 aa).

Residue Glu290 is the Proton donor of the active site. Residues His311 and Lys425 contribute to the active site.

It belongs to the GPI family.

The protein resides in the cytoplasm. The catalysed reaction is alpha-D-glucose 6-phosphate = beta-D-fructose 6-phosphate. It functions in the pathway carbohydrate biosynthesis; gluconeogenesis. Its pathway is carbohydrate degradation; glycolysis; D-glyceraldehyde 3-phosphate and glycerone phosphate from D-glucose: step 2/4. Catalyzes the reversible isomerization of glucose-6-phosphate to fructose-6-phosphate. This Listeria innocua serovar 6a (strain ATCC BAA-680 / CLIP 11262) protein is Glucose-6-phosphate isomerase.